Consider the following 227-residue polypeptide: Endolytic peptidoglycan transglycosylase RlpA (227 aa).

The first 21 residues, 1-21, serve as a signal peptide directing secretion; the sequence is MMNHKFVLLILLIFYCFFLSG. Residue cysteine 22 is the site of N-palmitoyl cysteine attachment. Cysteine 22 carries S-diacylglycerol cysteine lipidation.

The protein belongs to the RlpA family.

It is found in the cell membrane. Its function is as follows. Lytic transglycosylase with a strong preference for naked glycan strands that lack stem peptides. The sequence is that of Endolytic peptidoglycan transglycosylase RlpA from Rickettsia bellii (strain RML369-C).